The following is a 134-amino-acid chain: Profilin-5 (134 aa).

This sequence belongs to the profilin family. Occurs in many kinds of cells as a complex with monomeric actin in a 1:1 ratio. Specifically expressed in mature pollen grains. Expressed in germinating pollen grains. Expressed in growing pollen tubes (at protein level).

It localises to the cytoplasm. The protein resides in the cytoskeleton. In terms of biological role, binds to actin monomers and regulates the organization of the actin cytoskeleton. At high concentrations, profilin prevents the polymerization of actin, whereas it enhances it at low concentrations. At low concentrations, associates with the poly-proline motif of formins to enhance actin filament elongation rate. Acts redundantly with PRF4 to regulate apical actin polymerization at the tip of pollen tube and control polarized pollen tube growth. Functions probably by favoring formin-mediated actin polymerization at pollen tube tips. In Arabidopsis thaliana (Mouse-ear cress), this protein is Profilin-5.